Here is a 93-residue protein sequence, read N- to C-terminus: Small ribosomal subunit protein bS6 (93 aa).

Belongs to the bacterial ribosomal protein bS6 family.

In terms of biological role, binds together with bS18 to 16S ribosomal RNA. In Phytoplasma australiense, this protein is Small ribosomal subunit protein bS6.